Consider the following 1047-residue polypeptide: Atrial natriuretic peptide receptor 2 (1047 aa).

The first 16 residues, 1–16 (MALPSLLLVVAALAGG), serve as a signal peptide directing secretion. The Extracellular segment spans residues 17–458 (VRPPGARNLT…DKTPLSTLAI (442 aa)). Asn24 and Asn35 each carry an N-linked (GlcNAc...) asparagine glycan. A disulfide bridge links Cys75 with Cys101. Residues Asn161, Asn195, Asn244, Asn277, and Asn349 are each glycosylated (N-linked (GlcNAc...) asparagine). Residues 459–478 (VALGTGITFIMFGVSSFLIF) traverse the membrane as a helical segment. The Cytoplasmic portion of the chain corresponds to 479 to 1047 (RKLMLEKELA…GERKGPAGLL (569 aa)). Ser513 carries the post-translational modification Phosphoserine. Residues 513 to 786 (SRLTLSLRGS…PDFGQIKGFI (274 aa)) enclose the Protein kinase domain. At Thr516 the chain carries Phosphothreonine. Ser518, Ser522, Ser523, and Ser526 each carry phosphoserine. Thr529 bears the Phosphothreonine mark. Residues 861–991 (TIYFSDIVGF…DTVNTASRME (131 aa)) form the Guanylate cyclase domain.

It belongs to the adenylyl cyclase class-4/guanylyl cyclase family. Phosphorylated. Phosphorylation of the protein kinase-like domain is required for full activation by CNP. Post-translationally, glycosylated.

The protein resides in the cell membrane. The enzyme catalyses GTP = 3',5'-cyclic GMP + diphosphate. Its function is as follows. Receptor for the C-type natriuretic peptide NPPC/CNP hormone. Has guanylate cyclase activity upon binding of its ligand. May play a role in the regulation of skeletal growth. This is Atrial natriuretic peptide receptor 2 (NPR2) from Bos taurus (Bovine).